We begin with the raw amino-acid sequence, 353 residues long: MHLRHLFSPRLRGSLLLGSLLVASSFSTLAAEDMLRKAVGKGAYEMAWSQQENALWLATSQSRKLDKGGVVYRLDPVTLEITQAIHNDLKPFGATINAATQTLWFGNTINSAVTAIDAKTGDVKGRLVLDARKRTEEVRPLQPRELVADAATNTIYISGVGKESAIWVVDGETIKLKTTIENTGKMSTGLALDSKAQRLYTTNADGEFITIDTASNKILSRKKLLDDGKEHFFINLSLDTAGHRAFITDSKATEVLVVDTRNGNILAKIAAPASLAVLYNPTRNEAYVTHRQAGQVSVIDAKTYNVVKTFDTPTYPNSLALSADGKTLYVSVKQKSTREQEATQPDDVIRIAL.

An N-terminal signal peptide occupies residues 1–30; it reads MHLRHLFSPRLRGSLLLGSLLVASSFSTLA.

This is an uncharacterized protein from Salmonella typhi.